Here is a 429-residue protein sequence, read N- to C-terminus: Transcriptional coactivator AacuS (429 aa).

Residues 80-144 form the HTH iclR-type domain; it reads MASQTQLLAC…GFLQEPELGH (65 aa). The H-T-H motif DNA-binding region spans 110 to 129; sequence IKDVAELIGVPENHICRIVR.

It is found in the nucleus. Transcriptional coactivator; part of the gene cluster that mediates the biosynthesis of the tetrahydroxanthone dimer secalonic acid D. The polypeptide is Transcriptional coactivator AacuS (Aspergillus aculeatus (strain ATCC 16872 / CBS 172.66 / WB 5094)).